The chain runs to 182 residues: Protein Syd (182 aa).

This sequence belongs to the Syd family.

The protein localises to the cell inner membrane. In terms of biological role, interacts with the SecY protein in vivo. May bind preferentially to an uncomplexed state of SecY, thus functioning either as a chelating agent for excess SecY in the cell or as a regulatory factor that negatively controls the translocase function. In Aeromonas salmonicida (strain A449), this protein is Protein Syd.